A 215-amino-acid chain; its full sequence is Probable transaldolase (215 aa).

Lys83 acts as the Schiff-base intermediate with substrate in catalysis.

Belongs to the transaldolase family. Type 3B subfamily.

The protein localises to the cytoplasm. It catalyses the reaction D-sedoheptulose 7-phosphate + D-glyceraldehyde 3-phosphate = D-erythrose 4-phosphate + beta-D-fructose 6-phosphate. It functions in the pathway carbohydrate degradation; pentose phosphate pathway; D-glyceraldehyde 3-phosphate and beta-D-fructose 6-phosphate from D-ribose 5-phosphate and D-xylulose 5-phosphate (non-oxidative stage): step 2/3. In terms of biological role, transaldolase is important for the balance of metabolites in the pentose-phosphate pathway. The chain is Probable transaldolase from Methanococcus maripaludis (strain C6 / ATCC BAA-1332).